The following is a 2426-amino-acid chain: Protein SON (2426 aa).

At Ala-2 the chain carries N-acetylalanine. Lys-16 bears the N6-acetyllysine mark. Positions 24–42 (LSSGRNEGQLNGETNTPIE) are enriched in polar residues. The segment at 24-56 (LSSGRNEGQLNGETNTPIEGNQAGDAAASARSL) is disordered. Residue Lys-64 forms a Glycyl lysine isopeptide (Lys-Gly) (interchain with G-Cter in SUMO2) linkage. Basic and acidic residues predominate over residues 77–88 (LRYKPDLKEGSR). Residues 77–155 (LRYKPDLKEG…GNIDLESDSF (79 aa)) form a disordered region. The residue at position 94 (Ser-94) is a Phosphoserine. A compositionally biased stretch (basic residues) spans 106–130 (KKSKKHKKHKNKKKKKKKEKEKKYK). Residues 131 to 146 (RQPEESESKTKSHDDG) show a composition bias toward basic and acidic residues. Residues Ser-142, Ser-152, Ser-154, Ser-160, and Ser-283 each carry the phosphoserine modification. At Lys-288 the chain carries N6-acetyllysine. Positions 305 to 328 (TLVVSSETPTEVYPEPSTSTTMDF) are disordered. Thr-400 is subject to Phosphothreonine. Residues 406–442 (PGPSATPVPELPGPLSTPVPELPGPPATAVPELPGPS) form a disordered region. Residues 409–442 (SATPVPELPGPLSTPVPELPGPPATAVPELPGPS) show a composition bias toward pro residues. The 17 X 10 AA tandem repeats of L-A-[ST]-[NSG]-[TS]-MDSQM stretch occupies residues 726–895 (LASNTMDSQM…LASGTMDAQM (170 aa)). The segment at 912–988 (DPYRLAQDPY…IAPRPYRLAP (77 aa)) is 11 X 7 AA tandem repeats of [DR]-P-Y-R-[LI][AG][QHP]. Omega-N-methylarginine is present on Arg-950. Thr-959 is subject to Phosphothreonine. A Phosphoserine modification is found at Ser-998. 14 consecutive repeat copies span residues 1006-1011 (ERSMMS), 1014-1019 (ERSMMS), 1021-1026 (ERSMMS), 1030-1035 (ERSMMS), 1038-1043 (ERSMMS), 1046-1051 (ERSMMS), 1055-1060 (ERSMMS), 1063-1068 (ERSMMS), 1071-1076 (ERSMMS), 1080-1085 (DRSMMS), 1089-1094 (DRSMMS), 1100-1105 (DRSMMS), 1111-1116 (DRSMMS), and 1121-1126 (DRSMMS). The 14 X 6 AA repeats of [ED]-R-S-M-M-S stretch occupies residues 1006–1126 (ERSMMSSYER…SYTADRSMMS (121 aa)). Position 1007 is an asymmetric dimethylarginine (Arg-1007). Arg-1022 carries the post-translational modification Asymmetric dimethylarginine. A phosphoserine mark is found at Ser-1035 and Ser-1043. Residues Ser-1060 and Ser-1068 each carry the phosphoserine modification. At Ser-1082 the chain carries Phosphoserine. The segment at 1144–1236 (YMVPPLPPEE…PTDYSVSASD (93 aa)) is disordered. Positions 1147-1179 (PPLPPEEPPTMPPLPPEEPPMTPPLPPEEPPEG) are 3 X 11 AA tandem repats of P-P-L-P-P-E-E-P-P-[TME]-[MTG]. A compositionally biased stretch (pro residues) spans 1147-1180 (PPLPPEEPPTMPPLPPEEPPMTPPLPPEEPPEGP). Polar residues predominate over residues 1186 to 1196 (QSALTAENTWP). The segment covering 1198–1224 (EVPSSPSEESVSQPEPPVSQSEISEPS) has biased composition (low complexity). A 4 X 8 AA tandem repeats of V-L-E-SS-[AVT]-VT region spans residues 1359–1390 (VLESSAVTVLESSTVTVLESSTVTVLEPSVVT). A phosphoserine mark is found at Ser-1556 and Ser-1651. The tract at residues 1645–1722 (TSPSGGSEAD…KETLPDSGFS (78 aa)) is disordered. A compositionally biased stretch (basic and acidic residues) spans 1677-1689 (KDTEEPLPVKESD). Phosphoserine is present on residues Ser-1697, Ser-1701, Ser-1747, Ser-1759, Ser-1766, Ser-1769, Ser-1782, and Ser-1783. Residues 1754–2054 (GPLLASDVGR…RSPKRLTDLD (301 aa)) form a disordered region. Basic and acidic residues-rich tracts occupy residues 1790–1801 (YEIFVKVKDTHE), 1809–1822 (RDKG…DSSL), and 1830–1845 (KSSE…ESRS). 2 stretches are compositionally biased toward basic residues: residues 1846–1909 (RARK…RKRS) and 1917–1948 (TVRA…RRRS). Repeat copies occupy residues 1925–1931 (PSRRSRS), 1934–1952 (PSRR…FSIS), 1953–1959 (PSRRSRT), 1960–1966 (PSRRSRT), 1967–1973 (PSRRSRT), 1974–1980 (PSRRSRT), 1981–1987 (PSRRSRT), 1988–1994 (PSRRSRT), and 1995–2013 (PSRR…FSIS). Residues 1925 to 1994 (PSRRSRSHTP…SRTPSRRSRT (70 aa)) are 7 X 7 AA repeats of P-S-R-R-S-R-[TS]. Residues 1934-2013 (PSRRRRSRSV…VVRRRSFSIS (80 aa)) form a 2 X 19 AA repeats of P-S-R-R-R-R-S-R-S-V-V-R-R-R-S-F-S-I-S region. Ser-1948, Ser-1950, and Ser-1952 each carry phosphoserine. Positions 1955–2009 (RRSRTPSRRSRTPSRRSRTPSRRSRTPSRRSRTPSRRSRTPSRRRRSRSVVRRRS) are enriched in basic residues. 5 positions are modified to phosphoserine: Ser-2009, Ser-2011, Ser-2013, Ser-2029, and Ser-2031. The 3 X tandem repeats of [ST]-P-[VLI]-R-[RL]-[RK]-[RF]-S-R stretch occupies residues 2013–2039 (SPVRLRRSRTPLRRRFSRSPIRRKRSR). Over residues 2016-2038 (RLRRSRTPLRRRFSRSPIRRKRS) the composition is skewed to basic residues. The span at 2039-2054 (RSSERGRSPKRLTDLD) shows a compositional bias: basic and acidic residues. Lys-2055 carries the N6-acetyllysine; alternate modification. A Glycyl lysine isopeptide (Lys-Gly) (interchain with G-Cter in SUMO2); alternate cross-link involves residue Lys-2055. A Glycyl lysine isopeptide (Lys-Gly) (interchain with G-Cter in SUMO2) cross-link involves residue Lys-2092. Ser-2129 bears the Phosphoserine mark. A Glycyl lysine isopeptide (Lys-Gly) (interchain with G-Cter in SUMO2) cross-link involves residue Lys-2149. Phosphothreonine is present on Thr-2163. A disordered region spans residues 2200–2220 (KNGEENKDDDNVFSSNLPSEP). Phosphoserine is present on Ser-2238. Positions 2305–2351 (TGGMGAVLMRKMGWREGEGLGKNKEGNKEPILVDFKTDRKGLVAVGE) constitute a G-patch domain. One can recognise a DRBM domain in the interval 2371-2426 (HPVSALMEICNKRRWQPPEFLLVHDSGPDHRKHFLFRVLRNGALTRPNCMFFLNRY).

In terms of assembly, interacts with SRSF2. Associates with the spliceosome. Interacts with the AML1-MTG8 (AML1-ETO) fusion protein, possibly leading to trigger signals inhibiting leukemogenesis. Interacts with USH1G. Widely expressed, with the higher expression seen in leukocyte and heart.

The protein resides in the nucleus speckle. Its function is as follows. RNA-binding protein that acts as a mRNA splicing cofactor by promoting efficient splicing of transcripts that possess weak splice sites. Specifically promotes splicing of many cell-cycle and DNA-repair transcripts that possess weak splice sites, such as TUBG1, KATNB1, TUBGCP2, AURKB, PCNT, AKT1, RAD23A, and FANCG. Probably acts by facilitating the interaction between Serine/arginine-rich proteins such as SRSF2 and the RNA polymerase II. Also binds to DNA; binds to the consensus DNA sequence: 5'-GA[GT]AN[CG][AG]CC-3'. May indirectly repress hepatitis B virus (HBV) core promoter activity and transcription of HBV genes and production of HBV virions. Essential for correct RNA splicing of multiple genes critical for brain development, neuronal migration and metabolism, including TUBG1, FLNA, PNKP, WDR62, PSMD3, PCK2, PFKL, IDH2, and ACY1. The protein is Protein SON (SON) of Homo sapiens (Human).